An 85-amino-acid polypeptide reads, in one-letter code: Actobindin homolog (85 aa).

The WH2 domain maps to 35–52; that stretch reads DRNELLSGIKEGKELKKA.

Functionally, is able to bind two actin monomers at high concentrations of G-actin. The sequence is that of Actobindin homolog from Entamoeba histolytica.